The chain runs to 352 residues: MSYERERYIAELAVQRATILTQKVFNEKAKGTVSKDDKSPVTIGDFGAQALIIQAIRKNFPNDEIVAEEEASTLREDKALSAEIWRLVKDIKLEDAESNELLGGSLPSEEAMLDIIDEGKSAGGPKGRIWALDPIDGTKGFLRGGQYAVCLGLLEDGDVKVGAIGCPNLPVDDAATISSSIGVDQNSGAGNGVLFSAIKGAGSVSRPLTSGARAESKSISMRPVPDIAQAVFCEGVEAGHSAQGDNAAVAQLLGITSPSVRLDSQAKYCSIARGAGDIYLRLPVKKDYQEKIWDHAAGDLIVREAGGQVTDIYGQTLDFSKGRTLAANKGVVAAPKAIQDEVISAVKKVLKL.

The active-site Proton acceptor is D45. The Mg(2+) site is built by E68, D133, I135, and D136. Residue T138 is the Proton acceptor of the active site. Adenosine 3',5'-bisphosphate is bound by residues T138, H240, S264, K267, R281, and D294. H240, S264, K267, R281, and D294 together coordinate AMP. Residue D294 participates in Mg(2+) binding.

It belongs to the inositol monophosphatase superfamily. Mg(2+) serves as cofactor.

It catalyses the reaction 3'-phosphoadenylyl sulfate + H2O = adenosine 5'-phosphosulfate + phosphate. The enzyme catalyses adenosine 3',5'-bisphosphate + H2O = AMP + phosphate. It carries out the reaction adenosine 2',5'-bisphosphate + H2O = AMP + phosphate. Phosphatase that converts adenosine 3'-phosphate 5'-phosphosulfate (PAPS) to adenosine 5'-phosphosulfate (APS) and 3'(2')-phosphoadenosine 5'-phosphate (PAP) to AMP. May regulate the flux of sulfur in the sulfur-activation pathway by converting PAPS to APS. Involved in osmoadaptation. The sequence is that of 3'(2'),5'-bisphosphate nucleotidase from Emericella nidulans (strain FGSC A4 / ATCC 38163 / CBS 112.46 / NRRL 194 / M139) (Aspergillus nidulans).